Here is a 190-residue protein sequence, read N- to C-terminus: Threonylcarbamoyl-AMP synthase (190 aa).

Residues 8–190 (RFRIRQCAAR…DAESGAVIRA (183 aa)) enclose the YrdC-like domain.

The protein belongs to the SUA5 family. TsaC subfamily.

Its subcellular location is the cytoplasm. The enzyme catalyses L-threonine + hydrogencarbonate + ATP = L-threonylcarbamoyladenylate + diphosphate + H2O. Required for the formation of a threonylcarbamoyl group on adenosine at position 37 (t(6)A37) in tRNAs that read codons beginning with adenine. Catalyzes the conversion of L-threonine, HCO(3)(-)/CO(2) and ATP to give threonylcarbamoyl-AMP (TC-AMP) as the acyladenylate intermediate, with the release of diphosphate. This chain is Threonylcarbamoyl-AMP synthase, found in Alkalilimnicola ehrlichii (strain ATCC BAA-1101 / DSM 17681 / MLHE-1).